Consider the following 215-residue polypeptide: Adenylate kinase (215 aa).

Position 10–15 (10–15) interacts with ATP; that stretch reads GAGKGT. The NMP stretch occupies residues 30–59; that stretch reads STGDMLRAAVKAETELGLKAKSVMDSGGLV. AMP-binding positions include Thr-31, Arg-36, 57–59, 85–88, and Gln-92; these read GLV and GFPR. Positions 122-159 are LID; it reads GRRVHEGSGRIYHTIFNPPKVEGIDDVTGEPLLQRKDD. Residues Arg-123 and 132–133 contribute to the ATP site; that span reads IY. Residues Arg-156 and Arg-167 each coordinate AMP. Gly-201 contacts ATP.

Belongs to the adenylate kinase family. Monomer.

It is found in the cytoplasm. It carries out the reaction AMP + ATP = 2 ADP. Its pathway is purine metabolism; AMP biosynthesis via salvage pathway; AMP from ADP: step 1/1. Functionally, catalyzes the reversible transfer of the terminal phosphate group between ATP and AMP. Plays an important role in cellular energy homeostasis and in adenine nucleotide metabolism. This is Adenylate kinase from Pseudomonas syringae pv. syringae (strain B728a).